The following is a 194-amino-acid chain: 3-isopropylmalate dehydratase small subunit (194 aa).

The protein belongs to the LeuD family. LeuD type 1 subfamily. In terms of assembly, heterodimer of LeuC and LeuD.

It carries out the reaction (2R,3S)-3-isopropylmalate = (2S)-2-isopropylmalate. Its pathway is amino-acid biosynthesis; L-leucine biosynthesis; L-leucine from 3-methyl-2-oxobutanoate: step 2/4. Catalyzes the isomerization between 2-isopropylmalate and 3-isopropylmalate, via the formation of 2-isopropylmaleate. The polypeptide is 3-isopropylmalate dehydratase small subunit (Brevibacillus brevis (strain 47 / JCM 6285 / NBRC 100599)).